The primary structure comprises 329 residues: Peroxidase 73 (329 aa).

Residues 1 to 25 form the signal peptide; the sequence is MARFSLVVVVTLSLAISMFPDTTTA. Intrachain disulfides connect Cys36/Cys119, Cys69/Cys74, Cys125/Cys325, and Cys204/Cys236. His67 acts as the Proton acceptor in catalysis. Residues Asp68, Val71, Gly73, Asp75, and Ser77 each coordinate Ca(2+). A substrate-binding site is contributed by Pro167. Residue His197 participates in heme b binding. Residue Thr198 participates in Ca(2+) binding. The N-linked (GlcNAc...) asparagine glycan is linked to Asn215. Ca(2+) is bound by residues Asp249, Thr252, and Asp257.

The protein belongs to the peroxidase family. Classical plant (class III) peroxidase subfamily. Requires heme b as cofactor. The cofactor is Ca(2+). Expressed in the whole plant, with the highest expression in roots.

The protein localises to the secreted. It carries out the reaction 2 a phenolic donor + H2O2 = 2 a phenolic radical donor + 2 H2O. Its function is as follows. Removal of H(2)O(2), oxidation of toxic reductants, biosynthesis and degradation of lignin, suberization, auxin catabolism, response to environmental stresses such as wounding, pathogen attack and oxidative stress. These functions might be dependent on each isozyme/isoform in each plant tissue. This is Peroxidase 73 (PER73) from Arabidopsis thaliana (Mouse-ear cress).